Here is a 933-residue protein sequence, read N- to C-terminus: Phosphoenolpyruvate carboxylase (933 aa).

Catalysis depends on residues H164 and K595.

It belongs to the PEPCase type 1 family. Mg(2+) is required as a cofactor.

It catalyses the reaction oxaloacetate + phosphate = phosphoenolpyruvate + hydrogencarbonate. Its function is as follows. Forms oxaloacetate, a four-carbon dicarboxylic acid source for the tricarboxylic acid cycle. The chain is Phosphoenolpyruvate carboxylase from Rhodopseudomonas palustris (strain BisB5).